The following is a 308-amino-acid chain: Mycothiol acetyltransferase (308 aa).

2 N-acetyltransferase domains span residues 16-152 (ETLA…RPLA) and 165-308 (VTVR…RTES). A 1D-myo-inositol 2-(L-cysteinylamino)-2-deoxy-alpha-D-glucopyranoside-binding site is contributed by Glu-47. Position 91-93 (91-93 (LVV)) interacts with acetyl-CoA. 3 residues coordinate 1D-myo-inositol 2-(L-cysteinylamino)-2-deoxy-alpha-D-glucopyranoside: Glu-192, Lys-231, and Glu-240. Residues 244-246 (LGV) and 251-257 (QGGGLGK) contribute to the acetyl-CoA site. A 1D-myo-inositol 2-(L-cysteinylamino)-2-deoxy-alpha-D-glucopyranoside-binding site is contributed by Tyr-278.

This sequence belongs to the acetyltransferase family. MshD subfamily. In terms of assembly, monomer.

It catalyses the reaction 1D-myo-inositol 2-(L-cysteinylamino)-2-deoxy-alpha-D-glucopyranoside + acetyl-CoA = mycothiol + CoA + H(+). Catalyzes the transfer of acetyl from acetyl-CoA to desacetylmycothiol (Cys-GlcN-Ins) to form mycothiol. The chain is Mycothiol acetyltransferase from Streptomyces avermitilis (strain ATCC 31267 / DSM 46492 / JCM 5070 / NBRC 14893 / NCIMB 12804 / NRRL 8165 / MA-4680).